The following is an 865-amino-acid chain: Valine--tRNA ligase (865 aa).

A 'HIGH' region motif is present at residues 43-53 (PNITGRIHMGH). Residues 523–527 (KMSKS) carry the 'KMSKS' region motif. Lys-526 is a binding site for ATP. Residues 797–865 (GLIDFEKEKE…RLESILRDLE (69 aa)) adopt a coiled-coil conformation.

The protein belongs to the class-I aminoacyl-tRNA synthetase family. ValS type 1 subfamily. In terms of assembly, monomer.

The protein localises to the cytoplasm. It catalyses the reaction tRNA(Val) + L-valine + ATP = L-valyl-tRNA(Val) + AMP + diphosphate. In terms of biological role, catalyzes the attachment of valine to tRNA(Val). As ValRS can inadvertently accommodate and process structurally similar amino acids such as threonine, to avoid such errors, it has a 'posttransfer' editing activity that hydrolyzes mischarged Thr-tRNA(Val) in a tRNA-dependent manner. The polypeptide is Valine--tRNA ligase (Thermotoga maritima (strain ATCC 43589 / DSM 3109 / JCM 10099 / NBRC 100826 / MSB8)).